Reading from the N-terminus, the 813-residue chain is Cadherin-22 (813 aa).

A signal peptide spans Met-1–Ala-33. Residues Ala-34–Pro-621 lie on the Extracellular side of the membrane. 5 consecutive Cadherin domains span residues Trp-61–Phe-165, Leu-166–Phe-274, Pro-275–Phe-391, Arg-392–Glu-495, and Leu-496–Phe-613. Residue Asn-159 is glycosylated (N-linked (GlcNAc...) asparagine). Residues Asn-463 and Asn-609 are each glycosylated (N-linked (GlcNAc...) asparagine). Residues Gly-622–Leu-642 traverse the membrane as a helical segment. Over Thr-643–Ser-813 the chain is Cytoplasmic. Positions Gly-696–Glu-726 are disordered.

As to expression, predominantly expressed in brain. Abundant in olfactory bulb, cerebrum, and cerebellum, less in pons, medulla, and spinal cord. Low expression in heart. No expression in lung, liver, spleen, kidney, testis, stomach, intestine, colon, and placenta.

It localises to the cell membrane. In terms of biological role, cadherins are calcium-dependent cell adhesion proteins. They preferentially interact with themselves in a homophilic manner in connecting cells; cadherins may thus contribute to the sorting of heterogeneous cell types. PB-cadherins may have a role in the morphological organization of pituitary gland and brain tissues. This chain is Cadherin-22 (Cdh22), found in Mus musculus (Mouse).